A 785-amino-acid polypeptide reads, in one-letter code: MDPKMLFCLPEGDALFNPLNTMFIQMACILVFSQFFYLFLKPCGQAGPVAQILAGIVLSLLTIIRKVHEFFLQKDSASYYIFFSFLLRTAFVFLIGLEIDLDFMKRNLKNSIVITLGSLVISGIIWLPFLWFLIRFMQIKGDFLTFYLAFLITLSNTAAPVVIRSIIDWKLHTSEIGRLAISCGLFIEITNIFIYTIVLSFISGTMTADIFIYSFATGVIILTNRFLASWLPKRNPKEKYLSKAETLAFIILILIIALTIESSNLNSTLFVFIIGLMFPREGKTYRTLIQRLSYPIHEFVLPVYFGYIGFRFSVNSLTKRHYLVLGMTVALSLLGKLLGVLFACSFLKIPKQYWLFLSTMLSVKGHIGLVLLDSNLMYKKWFTPVVHDMFVAALVIMTLLSGVITSLLLRSQEKSFAHIKTSLELFDTTEELRVLTCVYGVRHARGSISLVSALSGFSPGTSSSPFTPYLMHLIPLPKKRKTELLYHELDEDAGNSNGGDDEFGTNEGLEINDSIDSFTRDRKIMVRQVKLVAPMENMHEEICNATEDLRVSIVFLPFHKHQRIDGKTTNDGEVFRHMNRKVLKQAQCSIGIFVDRNITGFHQLHGSDSVQHVAALFFGGPDDREALSLCKWLTNNSQIHLTVIQFVADDSKTEKIVGDAVTKENNEVFLEIVSEDQTENETDRIFLEEFYHRFVTTGQVGFIEKRVSNGMQTLTILREIGEMYSLFVVGKNRGDCPMTSGMNDWEECPELGTVGDFLASSNMDVNASVLVVQRHRNSFDSFVDE.

Helical transmembrane passes span 19 to 39 (LNTM…FYLF), 44 to 64 (GQAG…LTII), 79 to 99 (YYIF…GLEI), 112 to 132 (IVIT…FLWF), 143 to 163 (FLTF…PVVI), 179 to 199 (LAIS…TIVL), 201 to 221 (FISG…GVII), 240 to 260 (YLSK…ALTI), 294 to 314 (YPIH…RFSV), 323 to 343 (LVLG…VLFA), 352 to 372 (QYWL…LVLL), and 389 to 409 (MFVA…SLLL).

The protein belongs to the monovalent cation:proton antiporter 2 (CPA2) transporter (TC 2.A.37) family. CHX (TC 2.A.37.4) subfamily. Specifically expressed in pollen.

Its subcellular location is the membrane. Functionally, may operate as a cation/H(+) antiporter. This Arabidopsis thaliana (Mouse-ear cress) protein is Cation/H(+) antiporter 1 (CHX1).